The chain runs to 697 residues: tRNA 5-methylaminomethyl-2-thiouridine biosynthesis bifunctional protein MnmC (697 aa).

The segment at 1-275 (MTAKPHKSCQ…KPATLAAIDH (275 aa)) is tRNA (mnm(5)s(2)U34)-methyltransferase. An FAD-dependent cmnm(5)s(2)U34 oxidoreductase region spans residues 280–697 (VGGGLASANL…LRKLLKGKAL (418 aa)).

In the N-terminal section; belongs to the methyltransferase superfamily. tRNA (mnm(5)s(2)U34)-methyltransferase family. It in the C-terminal section; belongs to the DAO family. FAD serves as cofactor.

It localises to the cytoplasm. The enzyme catalyses 5-aminomethyl-2-thiouridine(34) in tRNA + S-adenosyl-L-methionine = 5-methylaminomethyl-2-thiouridine(34) in tRNA + S-adenosyl-L-homocysteine + H(+). Its function is as follows. Catalyzes the last two steps in the biosynthesis of 5-methylaminomethyl-2-thiouridine (mnm(5)s(2)U) at the wobble position (U34) in tRNA. Catalyzes the FAD-dependent demodification of cmnm(5)s(2)U34 to nm(5)s(2)U34, followed by the transfer of a methyl group from S-adenosyl-L-methionine to nm(5)s(2)U34, to form mnm(5)s(2)U34. This is tRNA 5-methylaminomethyl-2-thiouridine biosynthesis bifunctional protein MnmC from Shewanella sp. (strain ANA-3).